Consider the following 293-residue polypeptide: 33 kDa chaperonin (293 aa).

2 disulfide bridges follow: Cys237-Cys239 and Cys271-Cys274.

Belongs to the HSP33 family. Post-translationally, under oxidizing conditions two disulfide bonds are formed involving the reactive cysteines. Under reducing conditions zinc is bound to the reactive cysteines and the protein is inactive.

The protein resides in the cytoplasm. Redox regulated molecular chaperone. Protects both thermally unfolding and oxidatively damaged proteins from irreversible aggregation. Plays an important role in the bacterial defense system toward oxidative stress. This is 33 kDa chaperonin from Haemophilus influenzae (strain 86-028NP).